The following is a 211-amino-acid chain: PITH domain-containing protein GA19395 (211 aa).

The PITH domain occupies 20 to 192 (DHALEMGIEY…GVTICNYEAR (173 aa)).

Belongs to the PITHD1 family.

This is PITH domain-containing protein GA19395 from Drosophila pseudoobscura pseudoobscura (Fruit fly).